A 152-amino-acid polypeptide reads, in one-letter code: Lipoprotein signal peptidase (152 aa).

3 helical membrane-spanning segments follow: residues 5–25 (LFVL…FWIV), 61–81 (WFFV…LATH), and 84–104 (LNIW…GNFI). Residues Asp-114 and Asp-130 contribute to the active site. A helical membrane pass occupies residues 125 to 145 (IFNVADSYLTVGVILLVICLW).

It belongs to the peptidase A8 family.

It localises to the cell membrane. The catalysed reaction is Release of signal peptides from bacterial membrane prolipoproteins. Hydrolyzes -Xaa-Yaa-Zaa-|-(S,diacylglyceryl)Cys-, in which Xaa is hydrophobic (preferably Leu), and Yaa (Ala or Ser) and Zaa (Gly or Ala) have small, neutral side chains.. The protein operates within protein modification; lipoprotein biosynthesis (signal peptide cleavage). In terms of biological role, this protein specifically catalyzes the removal of signal peptides from prolipoproteins. This is Lipoprotein signal peptidase from Streptococcus pyogenes serotype M2 (strain MGAS10270).